The chain runs to 547 residues: CTP synthase (547 aa).

The amidoligase domain stretch occupies residues 1-265 (MARYVFITGG…DQAVLDAFGI (265 aa)). S13 is a CTP binding site. A UTP-binding site is contributed by S13. ATP is bound by residues 14–19 (SLGKGL) and D71. Residues D71 and E139 each coordinate Mg(2+). Residues 146 to 148 (DIE), 186 to 191 (KTKPTQ), and K222 contribute to the CTP site. UTP contacts are provided by residues 186–191 (KTKPTQ) and K222. Positions 291–546 (RVAIVGKYTQ…IRAAVEVSRL (256 aa)) constitute a Glutamine amidotransferase type-1 domain. G353 contacts L-glutamine. Residue C380 is the Nucleophile; for glutamine hydrolysis of the active site. L-glutamine-binding positions include 381–384 (LGMQ), E404, and R474. Catalysis depends on residues H519 and E521.

The protein belongs to the CTP synthase family. In terms of assembly, homotetramer.

The enzyme catalyses UTP + L-glutamine + ATP + H2O = CTP + L-glutamate + ADP + phosphate + 2 H(+). It carries out the reaction L-glutamine + H2O = L-glutamate + NH4(+). The catalysed reaction is UTP + NH4(+) + ATP = CTP + ADP + phosphate + 2 H(+). The protein operates within pyrimidine metabolism; CTP biosynthesis via de novo pathway; CTP from UDP: step 2/2. Its activity is regulated as follows. Allosterically activated by GTP, when glutamine is the substrate; GTP has no effect on the reaction when ammonia is the substrate. The allosteric effector GTP functions by stabilizing the protein conformation that binds the tetrahedral intermediate(s) formed during glutamine hydrolysis. Inhibited by the product CTP, via allosteric rather than competitive inhibition. Its function is as follows. Catalyzes the ATP-dependent amination of UTP to CTP with either L-glutamine or ammonia as the source of nitrogen. Regulates intracellular CTP levels through interactions with the four ribonucleotide triphosphates. This is CTP synthase from Cereibacter sphaeroides (strain ATCC 17025 / ATH 2.4.3) (Rhodobacter sphaeroides).